Consider the following 374-residue polypeptide: Copper-containing nitrite reductase (374 aa).

The tat-type signal signal peptide spans 1–31 (MFTRRAALVGAAALASAPLVIRTAGAEEAPA). Plastocyanin-like domains lie at 93–189 (MTFD…IMVL) and 254–355 (GAVG…VLVE). Positions 126, 131, 166, 167, 177, 182, and 338 each coordinate Cu cation.

It belongs to the multicopper oxidase family. Homotrimer. Cu(2+) serves as cofactor. Requires Cu(+) as cofactor. It depends on FAD as a cofactor. Predicted to be exported by the Tat system. The position of the signal peptide cleavage has not been experimentally proven.

It is found in the periplasm. The enzyme catalyses nitric oxide + Fe(III)-[cytochrome c] + H2O = Fe(II)-[cytochrome c] + nitrite + 2 H(+). It functions in the pathway nitrogen metabolism; nitrate reduction (denitrification); dinitrogen from nitrate: step 2/4. This Cereibacter sphaeroides (strain ATCC 17025 / ATH 2.4.3) (Rhodobacter sphaeroides) protein is Copper-containing nitrite reductase (nirK).